A 156-amino-acid chain; its full sequence is Small ribosomal subunit protein uS7 (156 aa).

Belongs to the universal ribosomal protein uS7 family. Part of the 30S ribosomal subunit. Contacts proteins S9 and S11.

Functionally, one of the primary rRNA binding proteins, it binds directly to 16S rRNA where it nucleates assembly of the head domain of the 30S subunit. Is located at the subunit interface close to the decoding center, probably blocks exit of the E-site tRNA. The polypeptide is Small ribosomal subunit protein uS7 (Vibrio vulnificus (strain CMCP6)).